The primary structure comprises 406 residues: N-acetylmuramoyl-L-alanine amidase CwlM (406 aa).

Peptidoglycan-binding domain regions lie at residues 18-83 (SAAV…YRAL) and 105-160 (GDDV…LRSL). The MurNAc-LAA domain maps to 193–370 (IIIDPGRGGV…IAEGILAAVK (178 aa)).

The protein belongs to the N-acetylmuramoyl-L-alanine amidase 3 family.

The protein localises to the periplasm. It carries out the reaction Hydrolyzes the link between N-acetylmuramoyl residues and L-amino acid residues in certain cell-wall glycopeptides.. It participates in cell wall degradation; peptidoglycan degradation. Cell-wall hydrolase that hydrolyzes the amide bond between N-acetylmuramic acid and L-alanine in cell-wall glycopeptides. Is able to lyse whole mycobacteria, release peptidoglycan from the cell wall of M.luteus and M.smegmatis, and cleave N-acetylmuramoyl-L-alanyl-D-isoglutamine, releasing free N-acetylmuramic acid and dipeptide. The chain is N-acetylmuramoyl-L-alanine amidase CwlM from Mycobacterium tuberculosis (strain ATCC 25618 / H37Rv).